We begin with the raw amino-acid sequence, 700 residues long: AP-1-like transcription factor yap1 (700 aa).

2 disordered regions span residues 17–185 (SPGH…KDLE) and 228–296 (MPVN…VSLR). Positions 34–41 (MPVPGRDT) match the Bipartite nuclear localization signal motif. A compositionally biased stretch (polar residues) spans 47 to 59 (PSVSNGSQPSAHQ). Residues 67-74 (SPTPEMPP) carry the Bipartite nuclear localization signal motif. Over residues 103-112 (LDDDDDDASD) the composition is skewed to acidic residues. Positions 127 to 138 (AGRAAAASASGS) are enriched in low complexity. Over residues 150 to 185 (GDGKRELSKSERRKEQNRAAQKAFRERREAKVKDLE) the composition is skewed to basic and acidic residues. Positions 156–219 (LSKSERRKEQ…KRLQEENVAL (64 aa)) constitute a bZIP domain. The basic motif stretch occupies residues 158 to 182 (KSERRKEQNRAAQKAFRERREAKVK). The interval 184–191 (LEDKVAEL) is leucine-zipper. 2 transcription activation regions span residues 213–400 (QEEN…QPDS) and 452–577 (LGAT…GRGN). Low complexity predominate over residues 231–244 (NSRNSPNSNNGSFS). Positions 280 to 296 (SANTISDNSSESLVSLR) are enriched in polar residues. Residues 306-318 (FSDHFNTYALGVV) form a n-CRD region. 2 disordered regions span residues 320-359 (VPPPSSSSQPTQKYPSASNGQQSISSNSNSSNVISPPSAD) and 542-609 (NYLN…KATT). 2 stretches are compositionally biased toward low complexity: residues 335–358 (SASNGQQSISSNSNSSNVISPPSA) and 542–573 (NYLNMSPSPMMPLSNSQSPQSSDSRSNTNVSS). Polar residues predominate over residues 589–607 (MGSSRTSVSHDSTDLQGKA). The tract at residues 642 to 675 (PSELWMRFGMQHENSTEHLLIDDLCDQMRAKATC) is c-CRD. Residues 660–667 (LLIDDLCD) carry the Nuclear export signal motif. Residues Cys666 and Cys675 are joined by a disulfide bond.

Belongs to the bZIP family. YAP subfamily. Post-translationally, depending on the oxidative stress inducing agent, yap1 can undergo two distinct conformational changes, both involving disulfide bond formation, and both masking the nuclear export signal, thus abolishing nuclear export.

It localises to the nucleus. Its subcellular location is the cytoplasm. In terms of biological role, transcription activator involved in oxidative stress response and redox homeostasis. Regulates the transcription of genes encoding antioxidant enzymes and components of the cellular thiol-reducing pathways. Involved in antifungal resistance to fluconazole. The protein is AP-1-like transcription factor yap1 of Cryptococcus neoformans var. grubii serotype A (strain H99 / ATCC 208821 / CBS 10515 / FGSC 9487) (Filobasidiella neoformans var. grubii).